We begin with the raw amino-acid sequence, 180 residues long: SPbeta prophage-derived uncharacterized protein YosC (180 aa).

The chain is SPbeta prophage-derived uncharacterized protein YosC (yosC) from Bacillus subtilis (strain 168).